The following is a 301-amino-acid chain: Ribosomal protein L11 methyltransferase (301 aa).

4 residues coordinate S-adenosyl-L-methionine: T146, G167, D189, and N234.

This sequence belongs to the methyltransferase superfamily. PrmA family.

Its subcellular location is the cytoplasm. It catalyses the reaction L-lysyl-[protein] + 3 S-adenosyl-L-methionine = N(6),N(6),N(6)-trimethyl-L-lysyl-[protein] + 3 S-adenosyl-L-homocysteine + 3 H(+). Its function is as follows. Methylates ribosomal protein L11. The sequence is that of Ribosomal protein L11 methyltransferase from Acinetobacter baumannii (strain SDF).